Reading from the N-terminus, the 363-residue chain is NADH-quinone oxidoreductase subunit H (363 aa).

The next 10 membrane-spanning stretches (helical) occupy residues 29–49, 62–82, 96–116, 127–147, 163–183, 202–222, 238–257, 278–298, 299–319, and 339–359; these read VLKI…YVVW, GPMY…KLLF, FIIA…VVPF, VGLL…ILAG, AAQV…VMIA, FFDW…VSGV, EIVA…LFFL, WLSP…DWLW, KGGW…YIWF, and FIPL…YGVI.

This sequence belongs to the complex I subunit 1 family. NDH-1 is composed of 14 different subunits. Subunits NuoA, H, J, K, L, M, N constitute the membrane sector of the complex.

It localises to the cell inner membrane. It carries out the reaction a quinone + NADH + 5 H(+)(in) = a quinol + NAD(+) + 4 H(+)(out). Its function is as follows. NDH-1 shuttles electrons from NADH, via FMN and iron-sulfur (Fe-S) centers, to quinones in the respiratory chain. The immediate electron acceptor for the enzyme in this species is believed to be ubiquinone. Couples the redox reaction to proton translocation (for every two electrons transferred, four hydrogen ions are translocated across the cytoplasmic membrane), and thus conserves the redox energy in a proton gradient. This subunit may bind ubiquinone. The polypeptide is NADH-quinone oxidoreductase subunit H (Xanthomonas oryzae pv. oryzae (strain MAFF 311018)).